The chain runs to 273 residues: Large ribosomal subunit protein uL2 (273 aa).

The segment at 228 to 273 (VDHPHGGGEGKTSGGRHPVTPWGFPTKGKKTRKNKRTSKFIVKKRK) is disordered. The segment covering 254 to 273 (KGKKTRKNKRTSKFIVKKRK) has biased composition (basic residues).

The protein belongs to the universal ribosomal protein uL2 family. Part of the 50S ribosomal subunit. Forms a bridge to the 30S subunit in the 70S ribosome.

Functionally, one of the primary rRNA binding proteins. Required for association of the 30S and 50S subunits to form the 70S ribosome, for tRNA binding and peptide bond formation. It has been suggested to have peptidyltransferase activity; this is somewhat controversial. Makes several contacts with the 16S rRNA in the 70S ribosome. This chain is Large ribosomal subunit protein uL2, found in Rickettsia felis (strain ATCC VR-1525 / URRWXCal2) (Rickettsia azadi).